A 93-amino-acid chain; its full sequence is MDKNMLGDLDNLPEEDKLKMASMIEQLQIRDSLRMYNNLVERCFTDCVDSFRRKTLDKQEETCVKRCAEKFLKHSMRVGLRFAELNQGAATTD.

The short motif at 43 to 67 (CFTDCVDSFRRKTLDKQEETCVKRC) is the Twin CX3C motif element. 2 disulfide bridges follow: Cys-43/Cys-67 and Cys-47/Cys-63.

This sequence belongs to the small Tim family. As to quaternary structure, heterohexamer; composed of 3 copies of TIM9 and 3 copies of TIM10, named soluble 70 kDa complex. The complex associates with the TIM22 component of the TIM22 complex. Interacts with multi-pass transmembrane proteins in transit.

It is found in the mitochondrion inner membrane. Its function is as follows. Mitochondrial intermembrane chaperone that participates in the import and insertion of multi-pass transmembrane proteins into the mitochondrial inner membrane. May also be required for the transfer of beta-barrel precursors from the TOM complex to the sorting and assembly machinery (SAM complex) of the outer membrane. Acts as a chaperone-like protein that protects the hydrophobic precursors from aggregation and guide them through the mitochondrial intermembrane space. The sequence is that of Mitochondrial import inner membrane translocase subunit Tim9 (TIM9) from Mesembryanthemum crystallinum (Common ice plant).